Consider the following 324-residue polypeptide: Acetyl-coenzyme A carboxylase carboxyl transferase subunit beta (324 aa).

Positions 1–16 (MTKNNNDLSNSSSNPP) are enriched in low complexity. A disordered region spans residues 1–51 (MTKNNNDLSNSSSNPPSNRPVAGKEAELEIQRETHAAQSGQSESWLSRPIP). The segment covering 22–35 (AGKEAELEIQRETH) has biased composition (basic and acidic residues). The span at 36-45 (AAQSGQSESW) shows a compositional bias: polar residues. The 257-residue stretch at 68-324 (PSTECPQCHS…YRLLAKLTHV (257 aa)) folds into the CoA carboxyltransferase N-terminal domain. 4 residues coordinate Zn(2+): Cys-72, Cys-75, Cys-91, and Cys-94. The segment at 72–94 (CPQCHSMITNTALIFNAYVCPHC) adopts a C4-type zinc-finger fold.

Belongs to the AccD/PCCB family. Acetyl-CoA carboxylase is a heterohexamer composed of biotin carboxyl carrier protein (AccB), biotin carboxylase (AccC) and two subunits each of ACCase subunit alpha (AccA) and ACCase subunit beta (AccD). Zn(2+) is required as a cofactor.

The protein localises to the cytoplasm. The catalysed reaction is N(6)-carboxybiotinyl-L-lysyl-[protein] + acetyl-CoA = N(6)-biotinyl-L-lysyl-[protein] + malonyl-CoA. The protein operates within lipid metabolism; malonyl-CoA biosynthesis; malonyl-CoA from acetyl-CoA: step 1/1. In terms of biological role, component of the acetyl coenzyme A carboxylase (ACC) complex. Biotin carboxylase (BC) catalyzes the carboxylation of biotin on its carrier protein (BCCP) and then the CO(2) group is transferred by the transcarboxylase to acetyl-CoA to form malonyl-CoA. The chain is Acetyl-coenzyme A carboxylase carboxyl transferase subunit beta from Psychrobacter sp. (strain PRwf-1).